The chain runs to 294 residues: Single-stranded nucleic acid-binding protein (294 aa).

The disordered stretch occupies residues 1 to 30 (MSAEIEEATNAVNNLSINDSEQQPRAPTHK). Ser-2 bears the N-acetylserine mark. 2 positions are modified to phosphoserine: Ser-2 and Ser-16. The segment covering 10 to 25 (NAVNNLSINDSEQQPR) has biased composition (polar residues). One can recognise an RRM 1 domain in the interval 37–119 (DTIFIGNVAH…REIHIKRART (83 aa)). Phosphothreonine is present on Thr-49. A Phosphoserine modification is found at Ser-66. Phosphothreonine is present on residues Thr-91 and Thr-119. Arg-125 bears the Omega-N-methylarginine mark. Positions 131-151 (RGGFRGRGGFRGGFRGGYRGG) are RNA-binding RGG-box. Dimethylated arginine occurs at positions 135, 137, and 141. Arg-145 is modified (dimethylated arginine; alternate). The residue at position 145 (Arg-145) is an Omega-N-methylarginine; alternate. Omega-N-methylarginine is present on Arg-149. Gly residues predominate over residues 151–169 (GFRGRGNFRGRGGARGGFN). The interval 151–171 (GFRGRGNFRGRGGARGGFNGQ) is disordered. 3 positions are modified to dimethylated arginine: Arg-153, Arg-155, and Arg-159. A dimethylated arginine; alternate mark is found at Arg-161 and Arg-165. Omega-N-methylarginine; alternate occurs at positions 161 and 165. The RRM 2 domain occupies 186–274 (DTLYINNVPF…RELTVDVAVI (89 aa)). A Phosphothreonine modification is found at Thr-242. Ser-244 carries the post-translational modification Phosphoserine. Positions 275–294 (RPENDEEEIEQETGSEEKQE) are disordered. The span at 278–288 (NDEEEIEQETG) shows a compositional bias: acidic residues. Thr-287 carries the post-translational modification Phosphothreonine. Position 289 is a phosphoserine (Ser-289).

It belongs to the RRM GAR family. As to quaternary structure, associated with snR10 and snR11 small nuclear RNAs.

It localises to the cytoplasm. It is found in the nucleus. The protein localises to the nucleolus. Its subcellular location is the P-body. The protein resides in the stress granule. Its function is as follows. Functions in the transition of mRNAs from translation to an mRNP complex destined for decapping. High-copy-number suppressor of decapping defects. Overexpression suppresses decapping defects in both DCP1-2 and DCP2-7 mutations. Acts to promote translational repression of mRNA in conjunction with DHH1 and subsequent mRNA localization to P bodies. Promotes translational repression of mRNA during glucose deprivation. This Saccharomyces cerevisiae (strain ATCC 204508 / S288c) (Baker's yeast) protein is Single-stranded nucleic acid-binding protein (SBP1).